Consider the following 124-residue polypeptide: Alpha-endosulfine (124 aa).

At Ser74 the chain carries Phosphoserine; by GWL. A disordered region spans residues 99–124 (VTGDHIPTPQDLPQRKNTILTSKLAG). Over residues 113 to 124 (RKNTILTSKLAG) the composition is skewed to polar residues.

This sequence belongs to the endosulfine family. Post-translationally, phosphorylation at Ser-74 by gwl during mitosis is essential for interaction with ppp2r2d (PR55-delta) and subsequent inactivation of PP2A.

The protein resides in the cytoplasm. Protein phosphatase inhibitor that specifically inhibits protein phosphatase 2A (PP2A) during mitosis. When phosphorylated at Ser-67 during mitosis, specifically interacts with ppp2r2d (PR55-delta) and inhibits its activity, leading to inactivation of PP2A, an essential condition to keep cyclin-B1-CDK1 activity high during M phase. In Danio rerio (Zebrafish), this protein is Alpha-endosulfine (ensa).